We begin with the raw amino-acid sequence, 971 residues long: Translation initiation factor IF-2 (971 aa).

Residues 48–63 (DHLRKSHGATDGDKRK) show a composition bias toward basic and acidic residues. Disordered regions lie at residues 48–86 (DHLR…ARTI) and 100–381 (DDVA…STFQ). Low complexity predominate over residues 105-114 (GADQGQAQVA). The segment covering 121 to 181 (ELKRREEEAR…EEEAATKRAA (61 aa)) has biased composition (basic and acidic residues). A compositionally biased stretch (low complexity) spans 182–202 (AEVAAAQQQAAAQQAAAEQEA). Over residues 210–261 (DEARAAAERAAQREAAKKAEDAAREAADKARAEQEEISKRRAAAEAEARAIR) the composition is skewed to basic and acidic residues. A compositionally biased stretch (pro residues) spans 277–286 (PPKPVEPPKP). Residues 304–326 (ARPAVKKPAGAAAPATTQAPAGA) show a composition bias toward low complexity. Residues 356–369 (SSGGVDRGWRGGPK) show a composition bias toward gly residues. In terms of domain architecture, tr-type G spans 471–640 (PRPPVVTVMG…LLQAEVLELK (170 aa)). Residues 480–487 (GHVDHGKT) form a G1 region. A GTP-binding site is contributed by 480–487 (GHVDHGKT). Residues 505–509 (GITQH) form a G2 region. The interval 526-529 (DTPG) is G3. GTP-binding positions include 526–530 (DTPGH) and 580–583 (NKID). The segment at 580–583 (NKID) is G4. Residues 616 to 618 (SAK) are G5.

Belongs to the TRAFAC class translation factor GTPase superfamily. Classic translation factor GTPase family. IF-2 subfamily.

The protein localises to the cytoplasm. In terms of biological role, one of the essential components for the initiation of protein synthesis. Protects formylmethionyl-tRNA from spontaneous hydrolysis and promotes its binding to the 30S ribosomal subunits. Also involved in the hydrolysis of GTP during the formation of the 70S ribosomal complex. In Burkholderia orbicola (strain AU 1054), this protein is Translation initiation factor IF-2.